A 429-amino-acid chain; its full sequence is Ribosomal RNA small subunit methyltransferase B (429 aa).

Residues 254–260 (CAAPGGK), D277, D303, and D322 each bind S-adenosyl-L-methionine. C375 functions as the Nucleophile in the catalytic mechanism.

The protein belongs to the class I-like SAM-binding methyltransferase superfamily. RsmB/NOP family.

The protein resides in the cytoplasm. It catalyses the reaction cytidine(967) in 16S rRNA + S-adenosyl-L-methionine = 5-methylcytidine(967) in 16S rRNA + S-adenosyl-L-homocysteine + H(+). Specifically methylates the cytosine at position 967 (m5C967) of 16S rRNA. In Cronobacter sakazakii (strain ATCC BAA-894) (Enterobacter sakazakii), this protein is Ribosomal RNA small subunit methyltransferase B.